The following is a 316-amino-acid chain: 4-amino-5-hydroxymethyl-2-methylpyrimidine phosphate synthase (316 aa).

Lys66 is modified (N6-(pyridoxal phosphate)lysine). His70 is a catalytic residue. 118-121 contributes to the pyridoxal 5'-phosphate binding site; it reads GEFG. Residues 191–195 carry the CCCFC; essential for catalytic activity, may be the site of iron coordination motif; the sequence is CCCFC.

The protein belongs to the NMT1/THI5 family. Homodimer. It depends on Fe cation as a cofactor.

It catalyses the reaction N(6)-(pyridoxal phosphate)-L-lysyl-[4-amino-5-hydroxymethyl-2-methylpyrimidine phosphate synthase] + L-histidyl-[4-amino-5-hydroxymethyl-2-methylpyrimidine phosphate synthase] + 2 Fe(3+) + 4 H2O = L-lysyl-[4-amino-5-hydroxymethyl-2-methylpyrimidine phosphate synthase] + (2S)-2-amino-5-hydroxy-4-oxopentanoyl-[4-amino-5-hydroxymethyl-2-methylpyrimidine phosphate synthase] + 4-amino-2-methyl-5-(phosphooxymethyl)pyrimidine + 3-oxopropanoate + 2 Fe(2+) + 2 H(+). It participates in cofactor biosynthesis; thiamine diphosphate biosynthesis. In terms of biological role, responsible for the formation of the pyrimidine heterocycle in the thiamine biosynthesis pathway. Catalyzes the formation of hydroxymethylpyrimidine phosphate (HMP-P) from histidine and pyridoxal phosphate (PLP). The protein uses PLP and the active site histidine to form HMP-P, generating an inactive enzyme. The enzyme can only undergo a single turnover, which suggests it is a suicide enzyme. The polypeptide is 4-amino-5-hydroxymethyl-2-methylpyrimidine phosphate synthase (Legionella pneumophila subsp. pneumophila (strain Philadelphia 1 / ATCC 33152 / DSM 7513)).